The following is a 320-amino-acid chain: Cyclin-H (320 aa).

Ser5 is modified (phosphoserine; by CDK8). Ser132 is modified (phosphoserine). At Ser304 the chain carries Phosphoserine; by CDK8.

Belongs to the cyclin family. Cyclin C subfamily. In terms of assembly, associates primarily with CDK7 and MAT1 to form the CAK complex. CAK can further associate with the core-TFIIH to form the TFIIH basal transcription factor.

Its subcellular location is the nucleus. Functionally, regulates CDK7, the catalytic subunit of the CDK-activating kinase (CAK) enzymatic complex. CAK activates the cyclin-associated kinases CDK1, CDK2, CDK4 and CDK6 by threonine phosphorylation. CAK complexed to the core-TFIIH basal transcription factor activates RNA polymerase II by serine phosphorylation of the repetitive C-terminal domain (CTD) of its large subunit (POLR2A), allowing its escape from the promoter and elongation of the transcripts. Involved in cell cycle control and in RNA transcription by RNA polymerase II. Its expression and activity are constant throughout the cell cycle. This is Cyclin-H (CCNH) from Bos taurus (Bovine).